Reading from the N-terminus, the 368-residue chain is DNA replication and repair protein RecF (368 aa).

Position 30–37 (30–37) interacts with ATP; sequence GNNAQGKT.

It belongs to the RecF family.

The protein resides in the cytoplasm. In terms of biological role, the RecF protein is involved in DNA metabolism; it is required for DNA replication and normal SOS inducibility. RecF binds preferentially to single-stranded, linear DNA. It also seems to bind ATP. The sequence is that of DNA replication and repair protein RecF from Streptococcus pyogenes serotype M49 (strain NZ131).